The primary structure comprises 161 residues: SUZ RNA-binding domain-containing (161 aa).

Positions methionine 1 to glycine 17 are enriched in acidic residues. Residues methionine 1–arginine 161 form a disordered region. Over residues glutamate 18–leucine 35 the composition is skewed to basic and acidic residues. Residues arginine 42 to threonine 111 enclose the SUZ domain. The span at proline 70–serine 91 shows a compositional bias: polar residues. Basic and acidic residues-rich tracts occupy residues alanine 93–lysine 104 and proline 116–proline 126. Residues proline 116–arginine 160 form the SUZ-C domain. Phosphoserine is present on serine 125.

It belongs to the SZRD1 family.

In Danio rerio (Zebrafish), this protein is SUZ RNA-binding domain-containing (szrd1).